The sequence spans 75 residues: Pro-glucagon (75 aa).

It belongs to the glucagon family.

Its subcellular location is the secreted. Its function is as follows. Plays a key role in glucose metabolism and homeostasis. Regulates blood glucose by increasing gluconeogenesis and decreasing glycolysis. In Amia calva (Bowfin), this protein is Pro-glucagon (gcg).